A 339-amino-acid polypeptide reads, in one-letter code: tRNA methyltransferase 10 homolog A (339 aa).

Disordered stretches follow at residues 1–90 and 282–339; these read MSSE…HDRK and DKAC…SLPH. Residues 14 to 35 are compositionally biased toward basic and acidic residues; that stretch reads NVDKKQGINEDQEESQKPRLGE. Residues 52-81 are a coiled coil; it reads KQWEEQRELRKQKRKEKRKRKKLERQCQME. A compositionally biased stretch (basic residues) spans 61-74; sequence RKQKRKEKRKRKKL. The region spanning 89 to 279 is the SAM-dependent MTase TRM10-type domain; that stretch reads RKRVRRDVVH…TILPQRKGAV (191 aa). Positions 300–309 are enriched in acidic residues; that stretch reads GGSDSDSSEE. Over residues 310-330 the composition is skewed to basic and acidic residues; the sequence is EYSRNELDSPHEEKQDKENHT. At serine 336 the chain carries Phosphoserine.

Belongs to the class IV-like SAM-binding methyltransferase superfamily. TRM10 family. In terms of assembly, interacts with tRNA. As to expression, expressed in embryonic and fetal brain. It is expressed throughout the dorsal telencephalon at 8 and 11 weeks of gestation, with highest expression in ventricular zone and marginal zone. Detected in cerebellar cortex and nuclei, but not in dorsal telencephalon, at later stages.

The protein resides in the nucleus. Its subcellular location is the nucleolus. It catalyses the reaction guanosine(9) in tRNA + S-adenosyl-L-methionine = N(1)-methylguanosine(9) in tRNA + S-adenosyl-L-homocysteine + H(+). S-adenosyl-L-methionine-dependent guanine N(1)-methyltransferase that catalyzes the formation of N(1)-methylguanine at position 9 (m1G9) in tRNAs. Probably not able to catalyze formation of N(1)-methyladenine at position 9 (m1A9) in tRNAs. The polypeptide is tRNA methyltransferase 10 homolog A (TRMT10A) (Homo sapiens (Human)).